Consider the following 131-residue polypeptide: Snaclec coagulation factor IX/factor X-binding protein subunit A (131 aa).

The 131-residue stretch at 1–131 (DCLPGWSSHE…EEPQRFTCEI (131 aa)) folds into the C-type lectin domain. Cystine bridges form between cysteine 2/cysteine 13, cysteine 30/cysteine 129, and cysteine 104/cysteine 121. Ca(2+)-binding residues include serine 41, glutamate 43, and glutamate 47. Glutamate 130 contacts Ca(2+).

This sequence belongs to the snaclec family. Heterodimer of subunits A and B; disulfide-linked. Expressed by the venom gland.

The protein resides in the secreted. Its function is as follows. Anticoagulant protein which binds to coagulation factor IX (F9) and coagulation factor X (F10) in the presence of calcium. It may bind the gamma-carboxyglutamic acid-domain regions of factors with a 1 to 1 stoichiometry. The dissociation constant (K(d)) are 6.6 nM for factor IX (F9) and 125 nM for factor X (F10). Does not bind carbohydrates. In Echis carinatus (Saw-scaled viper), this protein is Snaclec coagulation factor IX/factor X-binding protein subunit A.